A 581-amino-acid polypeptide reads, in one-letter code: Neither inactivation nor afterpotential protein G (581 aa).

A signal peptide spans 1-26 (MGMKFQKILVLAGIVIGFLSIIVVLA). FAD is bound at residue 48 to 77 (DYVIVGGGTGGSTLTSLLAKNSNGSVLLIE). N-linked (GlcNAc...) asparagine glycosylation is found at asparagine 70, asparagine 156, asparagine 404, and asparagine 464. Catalysis depends on histidine 516, which acts as the Proton acceptor.

The protein belongs to the GMC oxidoreductase family. Requires FAD as cofactor.

The protein localises to the secreted. Its function is as follows. Oxidoreductase involved in biosynthesis of 3-hydroxyretinal, a chromophore for rhodopsin Rh1. Not responsible for the initial hydroxylation of the retinal ring but rather acts in a subsequent step in chromophore production. May catalyze the conversion of (3R)-3-hydroxyretinol to the 3S enantiomer. The sequence is that of Neither inactivation nor afterpotential protein G (ninaG) from Drosophila melanogaster (Fruit fly).